A 143-amino-acid polypeptide reads, in one-letter code: ATP synthase F(0) complex subunit C2, mitochondrial (143 aa).

The transit peptide at 1–68 directs the protein to the mitochondrion; the sequence is MYTCAKFVST…RSFQTSAISR (68 aa). The helical transmembrane segment at 84–104 threads the bilayer; it reads VGVAGSGAGIGTVFGSLIIGY. The residue at position 111 (lysine 111) is an N6,N6,N6-trimethyllysine. The helical transmembrane segment at 119–139 threads the bilayer; that stretch reads ILGFALSEAMGLFCLMVAFLI.

Belongs to the ATPase C chain family. F-type ATPases have 2 components, CF(1) - the catalytic core - and CF(0) - the membrane proton channel. CF(1) has five subunits: alpha(3), beta(3), gamma(1), delta(1), epsilon(1). CF(0) has three main subunits: a, b and c. Interacts with DNAJC30; interaction is direct. Post-translationally, trimethylated by ATPSCKMT at Lys-111. Methylation is required for proper incorporation of the C subunit into the ATP synthase complex and mitochondrial respiration.

It localises to the mitochondrion membrane. Functionally, mitochondrial membrane ATP synthase (F(1)F(0) ATP synthase or Complex V) produces ATP from ADP in the presence of a proton gradient across the membrane which is generated by electron transport complexes of the respiratory chain. F-type ATPases consist of two structural domains, F(1) - containing the extramembraneous catalytic core and F(0) - containing the membrane proton channel, linked together by a central stalk and a peripheral stalk. During catalysis, ATP synthesis in the catalytic domain of F(1) is coupled via a rotary mechanism of the central stalk subunits to proton translocation. Part of the complex F(0) domain. A homomeric c-ring of probably 10 subunits is part of the complex rotary element. This is ATP synthase F(0) complex subunit C2, mitochondrial from Ovis aries (Sheep).